The chain runs to 386 residues: Histidinol-phosphate aminotransferase (386 aa).

N6-(pyridoxal phosphate)lysine is present on Lys-240.

The protein belongs to the class-II pyridoxal-phosphate-dependent aminotransferase family. Histidinol-phosphate aminotransferase subfamily. As to quaternary structure, homodimer. Requires pyridoxal 5'-phosphate as cofactor.

The catalysed reaction is L-histidinol phosphate + 2-oxoglutarate = 3-(imidazol-4-yl)-2-oxopropyl phosphate + L-glutamate. The protein operates within amino-acid biosynthesis; L-histidine biosynthesis; L-histidine from 5-phospho-alpha-D-ribose 1-diphosphate: step 7/9. The polypeptide is Histidinol-phosphate aminotransferase (Bifidobacterium longum (strain NCC 2705)).